We begin with the raw amino-acid sequence, 188 residues long: dCTP deaminase (188 aa).

DCTP-binding positions include 111–116, 135–137, Q156, Y170, K179, and Q180; these read KSTYAR and TLE. Catalysis depends on E137, which acts as the Proton donor/acceptor.

The protein belongs to the dCTP deaminase family. In terms of assembly, homotrimer.

It catalyses the reaction dCTP + H2O + H(+) = dUTP + NH4(+). Its pathway is pyrimidine metabolism; dUMP biosynthesis; dUMP from dCTP (dUTP route): step 1/2. Catalyzes the deamination of dCTP to dUTP. The chain is dCTP deaminase from Rickettsia felis (strain ATCC VR-1525 / URRWXCal2) (Rickettsia azadi).